The primary structure comprises 303 residues: Glycine--tRNA ligase alpha subunit (303 aa).

This sequence belongs to the class-II aminoacyl-tRNA synthetase family. As to quaternary structure, tetramer of two alpha and two beta subunits.

The protein resides in the cytoplasm. The catalysed reaction is tRNA(Gly) + glycine + ATP = glycyl-tRNA(Gly) + AMP + diphosphate. This chain is Glycine--tRNA ligase alpha subunit, found in Enterobacter sp. (strain 638).